The primary structure comprises 528 residues: Probable rhamnogalacturonate lyase A (528 aa).

The first 20 residues, 1 to 20 (MLSRTILFSTSFLWVRVANA), serve as a signal peptide directing secretion. 2 disulfides stabilise this stretch: Cys50-Cys93 and Cys184-Cys193.

This sequence belongs to the polysaccharide lyase 4 family.

The protein localises to the secreted. It catalyses the reaction Endotype eliminative cleavage of L-alpha-rhamnopyranosyl-(1-&gt;4)-alpha-D-galactopyranosyluronic acid bonds of rhamnogalacturonan I domains in ramified hairy regions of pectin leaving L-rhamnopyranose at the reducing end and 4-deoxy-4,5-unsaturated D-galactopyranosyluronic acid at the non-reducing end.. In terms of biological role, pectinolytic enzymes consist of four classes of enzymes: pectin lyase, polygalacturonase, pectin methylesterase and rhamnogalacturonase. Degrades the rhamnogalacturonan I (RG-I) backbone of pectin. This is Probable rhamnogalacturonate lyase A (rglA) from Aspergillus flavus (strain ATCC 200026 / FGSC A1120 / IAM 13836 / NRRL 3357 / JCM 12722 / SRRC 167).